The primary structure comprises 283 residues: Elongation factor Ts (283 aa).

The tract at residues 79–82 (TDFV) is involved in Mg(2+) ion dislocation from EF-Tu.

Belongs to the EF-Ts family.

It is found in the cytoplasm. Its function is as follows. Associates with the EF-Tu.GDP complex and induces the exchange of GDP to GTP. It remains bound to the aminoacyl-tRNA.EF-Tu.GTP complex up to the GTP hydrolysis stage on the ribosome. The chain is Elongation factor Ts from Shewanella amazonensis (strain ATCC BAA-1098 / SB2B).